Reading from the N-terminus, the 1084-residue chain is CRISPR-associated endonuclease Cas9 (1084 aa).

Asp-8 functions as the For RuvC-like nuclease domain in the catalytic mechanism. Asp-8, Glu-496, and Glu-500 together coordinate Mn(2+). Positions 504 to 665 (TEKRAREMDG…MDEEIDARSM (162 aa)) constitute an HNH Cas9-type domain. His-573 functions as the Proton acceptor for HNH nuclease domain in the catalytic mechanism. Residue His-727 participates in Mn(2+) binding.

The protein belongs to the CRISPR-associated protein Cas9 family. Subtype II-C subfamily. In terms of assembly, monomer. Binds crRNA and tracrRNA. Mg(2+) serves as cofactor.

Functionally, CRISPR (clustered regularly interspaced short palindromic repeat) is an adaptive immune system that provides protection against mobile genetic elements (viruses, transposable elements and conjugative plasmids). CRISPR clusters contain spacers, sequences complementary to antecedent mobile elements, and target invading nucleic acids. CRISPR clusters are transcribed and processed into CRISPR RNA (crRNA). In type II CRISPR systems correct processing of pre-crRNA requires a trans-encoded small RNA (tracrRNA), endogenous ribonuclease 3 (rnc) and this protein. The tracrRNA serves as a guide for ribonuclease 3-aided processing of pre-crRNA. Subsequently Cas9/crRNA/tracrRNA endonucleolytically cleaves linear or circular dsDNA target complementary to the spacer; Cas9 is inactive in the absence of the 2 guide RNAs (gRNA). Cas9 recognizes the protospacer adjacent motif (PAM) in the CRISPR repeat sequences to help distinguish self versus nonself, as targets within the bacterial CRISPR locus do not have PAMs. PAM recognition is also required for catalytic activity. This chain is CRISPR-associated endonuclease Cas9, found in Corynebacterium diphtheriae (strain ATCC 700971 / NCTC 13129 / Biotype gravis).